Reading from the N-terminus, the 467-residue chain is Fumarate hydratase class II (467 aa).

Substrate is bound by residues 98–100 (SGT), arginine 126, 129–132 (HPND), 139–141 (SSN), and threonine 187. Histidine 188 acts as the Proton donor/acceptor in catalysis. The active site involves serine 318. Substrate-binding positions include serine 319 and 324–326 (KVN).

It belongs to the class-II fumarase/aspartase family. Fumarase subfamily. Homotetramer.

The protein localises to the cytoplasm. It catalyses the reaction (S)-malate = fumarate + H2O. It functions in the pathway carbohydrate metabolism; tricarboxylic acid cycle; (S)-malate from fumarate: step 1/1. Involved in the TCA cycle. Catalyzes the stereospecific interconversion of fumarate to L-malate. The chain is Fumarate hydratase class II from Salmonella typhi.